Reading from the N-terminus, the 349-residue chain is MSKVPPTDPFSHMLNGNLQQRIVKRDIDGEVPTERAVTDLASEKAHAIATHGEVVIQIQHSDTFGMDKEKNDWRSRAARMLYIESRLVREGLSESLAMFFFMSLLLGCAATARFTGNQNDPMLAAFYHGFSIIFAIYVAGGISGGLLNPAITFTIAFLGRLSWLRCLIYMSAQYFGAFIASAVVYLIYYDSLQNFSGANKVDETGANGTAGIWSTFPRPYLSLRGAIFNQIFCTMLLTIGFLSICDFRNSRPDKGMFPFAVGMLIMTVFLAFSYSAGAAMNPARDISPRLWTLIVGYGDEVFSYNNYKWFWIPWLFPYVGALLGGVIYEIFIGIHWPKDYANKHVTNRT.

The next 2 membrane-spanning stretches (helical) occupy residues 92–112 (LSESLAMFFFMSLLLGCAATA) and 125–147 (AFYHGFSIIFAIYVAGGISGGLL). The NPA 1 motif lies at 148-150 (NPA). A helical transmembrane segment spans residues 167 to 187 (LIYMSAQYFGAFIASAVVYLI). Residues Asn-194 and Asn-207 are each glycosylated (N-linked (GlcNAc...) asparagine). A run of 2 helical transmembrane segments spans residues 225–245 (GAIFNQIFCTMLLTIGFLSIC) and 256–276 (MFPFAVGMLIMTVFLAFSYSA). Residues 281–283 (NPA) carry the NPA 2 motif. Residues 314-334 (WLFPYVGALLGGVIYEIFIGI) traverse the membrane as a helical segment.

Belongs to the MIP/aquaporin (TC 1.A.8) family.

Its subcellular location is the cell membrane. Aquaglyceroporin that may modulate the water content and osmolytes during anhydrobiosis. The sequence is that of Aquaporin-4 from Milnesium tardigradum (Water bear).